The sequence spans 326 residues: tRNA dimethylallyltransferase (326 aa).

Residue 10-17 (GPTGTGKT) participates in ATP binding. 12–17 (TGTGKT) provides a ligand contact to substrate. Residues 35-38 (DSMQ) form an interaction with substrate tRNA region.

The protein belongs to the IPP transferase family. As to quaternary structure, monomer. The cofactor is Mg(2+).

The enzyme catalyses adenosine(37) in tRNA + dimethylallyl diphosphate = N(6)-dimethylallyladenosine(37) in tRNA + diphosphate. Functionally, catalyzes the transfer of a dimethylallyl group onto the adenine at position 37 in tRNAs that read codons beginning with uridine, leading to the formation of N6-(dimethylallyl)adenosine (i(6)A). This is tRNA dimethylallyltransferase from Dictyoglomus turgidum (strain DSM 6724 / Z-1310).